Reading from the N-terminus, the 261-residue chain is Proliferating cell nuclear antigen (261 aa).

A DNA-binding region spans residues 61 to 80; sequence RCDRNQSIGVKMSSMSKILK. A Glycyl lysine isopeptide (Lys-Gly) (interchain with G-Cter in ubiquitin) cross-link involves residue Lys-164.

It belongs to the PCNA family. In terms of assembly, homotrimer. Forms a complex with activator 1 heteropentamer in the presence of ATP. Component of the replisome complex. Interacts with apex2.L (via PIP box and GRF-type Zinc finger domain); the interaction is required for 3'-5' single-strand break (SSB) end resection, assembly of a checkpoint protein complex to SSB sites, and SSB signaling. In terms of processing, monoubiquitinated by the ube2b-rad18 complex on Lys-164. Monoubiquitination at Lys-164 also takes place in undamaged proliferating cells, and is mediated by the dcx(dtl) complex, leading to enhance PCNA-dependent translesion DNA synthesis.

The protein localises to the nucleus. This protein is an auxiliary protein of DNA polymerase delta and is involved in the control of eukaryotic DNA replication by increasing the polymerase's processibility during elongation of the leading strand. Promotes 3'-5' nuclease activity of the DNA-endonuclease apex2.L in response to DNA damage. The polypeptide is Proliferating cell nuclear antigen (pcna) (Xenopus laevis (African clawed frog)).